We begin with the raw amino-acid sequence, 664 residues long: Protein-arginine deiminase type-3 (664 aa).

The protein belongs to the protein arginine deiminase family. It depends on Ca(2+) as a cofactor. As to expression, epidermis and hair follicles.

Its subcellular location is the cytoplasm. It catalyses the reaction L-arginyl-[protein] + H2O = L-citrullyl-[protein] + NH4(+). Functionally, catalyzes the deimination of arginine residues of proteins. The sequence is that of Protein-arginine deiminase type-3 (Padi3) from Mus musculus (Mouse).